Reading from the N-terminus, the 412-residue chain is BSD domain-containing protein 1 (412 aa).

The BSD domain occupies 146-198; it reads WLAYWDPEHRKAEISELLVTSPSIRALYTKMVPAAVSHSEFWQRYFYKVHQLE. Basic and acidic residues-rich tracts occupy residues 208 to 219 and 255 to 271; these read KQRADQSVHSEE and HVED…RDHT. 2 disordered regions span residues 208 to 228 and 255 to 383; these read KQRA…EEED and HVED…EKDF. A compositionally biased stretch (low complexity) spans 272–287; it reads SITSPSESSESISPIT. Residues 340–351 are compositionally biased toward basic and acidic residues; the sequence is THREDPPSDLRV. A compositionally biased stretch (polar residues) spans 355 to 374; sequence NSDSGKSTPSNNGQKGSSTD.

The protein is BSD domain-containing protein 1 (bsdc1) of Xenopus tropicalis (Western clawed frog).